A 271-amino-acid chain; its full sequence is Tryptophan synthase alpha chain (271 aa).

Catalysis depends on proton acceptor residues glutamate 49 and aspartate 60.

Belongs to the TrpA family. In terms of assembly, tetramer of two alpha and two beta chains.

The catalysed reaction is (1S,2R)-1-C-(indol-3-yl)glycerol 3-phosphate + L-serine = D-glyceraldehyde 3-phosphate + L-tryptophan + H2O. It participates in amino-acid biosynthesis; L-tryptophan biosynthesis; L-tryptophan from chorismate: step 5/5. Functionally, the alpha subunit is responsible for the aldol cleavage of indoleglycerol phosphate to indole and glyceraldehyde 3-phosphate. In Burkholderia lata (strain ATCC 17760 / DSM 23089 / LMG 22485 / NCIMB 9086 / R18194 / 383), this protein is Tryptophan synthase alpha chain.